The sequence spans 1485 residues: Glutamate receptor ionotropic, NMDA 2B (1485 aa).

The signal sequence occupies residues 1–26 (MKPRAECCSPKFWLVLAVLAVSGSRA). Residues 27 to 557 (RSQKSPPSIG…SAFLEPFSAD (531 aa)) lie on the Extracellular side of the membrane. A glycan (N-linked (GlcNAc...) asparagine) is linked at Asn74. Residues Cys86 and Cys321 are joined by a disulfide bond. Residues His127 and Glu284 each coordinate Zn(2+). N-linked (GlcNAc...) asparagine glycosylation is found at Asn341, Asn348, Asn444, and Asn491. 2 disulfides stabilise this stretch: Cys429–Cys456 and Cys436–Cys457. Positions 514 and 519 each coordinate L-glutamate. The N-linked (GlcNAc...) asparagine glycan is linked to Asn542. Residues 558–576 (VWVMMFVMLLIVSAVAVFV) traverse the membrane as a helical segment. Residues 577 to 603 (FEYFSPVGYNRCLADGREPGGPSFTIG) lie on the Cytoplasmic side of the membrane. The discontinuously helical intramembrane region spans 604-623 (KAIWLLWGLVFNNSVPVQNP). The segment at 604-623 (KAIWLLWGLVFNNSVPVQNP) is pore-forming. Topologically, residues 624–630 (KGTTSKI) are cytoplasmic. A helical membrane pass occupies residues 631–646 (MVSVWAFFAVIFLASY). The Extracellular portion of the chain corresponds to 647 to 817 (TANLAAFMIQ…VMSSQLDIDN (171 aa)). Asn688 carries an N-linked (GlcNAc...) asparagine glycan. L-glutamate-binding positions include 690–691 (ST) and Asp732. A disulfide bridge links Cys746 with Cys801. Residues 818 to 837 (MAGVFYMLGAAMALSLITFI) form a helical membrane-spanning segment. Residues 838–1485 (CEHLFYWQFR…EKLSSIESDV (648 aa)) lie on the Cytoplasmic side of the membrane. Phosphoserine occurs at positions 882, 886, 917, and 920. 2 positions are modified to phosphotyrosine: Tyr962 and Tyr1039. 3 positions are modified to phosphoserine: Ser1058, Ser1061, and Ser1064. The segment at 1074 to 1097 (EGNAAKRRKQQYKDSLKKRPASAK) is disordered. Phosphotyrosine is present on residues Tyr1109 and Tyr1133. At Ser1143 the chain carries Phosphoserine. The residue at position 1155 (Tyr1155) is a Phosphotyrosine. The disordered stretch occupies residues 1162 to 1194 (FKRDSVSGGGPCTNRSHLKHGAGDKHGVVSGVP). Ser1255 and Ser1259 each carry phosphoserine. The segment covering 1269 to 1278 (PVAVPSNAPS) has biased composition (low complexity). A disordered region spans residues 1269–1302 (PVAVPSNAPSTKYPQSPTNSKAQKKTRNKLRRQH). Over residues 1280–1289 (KYPQSPTNSK) the composition is skewed to polar residues. The segment covering 1290 to 1301 (AQKKTRNKLRRQ) has biased composition (basic residues). Residues 1292–1304 (KKTRNKLRRQHSY) are interaction with DAPK1. Ser1303 bears the Phosphoserine; by DAPK1 mark. Phosphotyrosine is present on Tyr1475. The PDZ-binding signature appears at 1483 to 1485 (SDV).

This sequence belongs to the glutamate-gated ion channel (TC 1.A.10.1) family. NR2B/GRIN2B subfamily. As to quaternary structure, heterotetramer. Forms heterotetrameric channels composed of two GluN1/zeta subunits (GRIN1), and two identical GluN2/epsilon subunits (GRIN2A, GRIN2B, GRIN2C or GRIN2D) or GluN3 subunits (GRIN3A or GRIN3B) (in vitro). Can also form heterotetrameric channels that contain at least two GluN1 subunits and at least two different GluN2 subunits (or a combination of one GluN2 and one GluN3 subunits) (in vitro). In vivo, the subunit composition may depend on the expression levels of the different subunits. Found in a complex with GRIN1, GRIN3A and PPP2CB. Found in a complex with GRIN1 and GRIN3B. Interacts with MAGI3. Interacts with HIP1 and Neto1. Interacts with PDZ domains of PATJ, DLG3 and DLG4. Interacts with DAPK1. Found in a complex with GRIN1 and PRR7. Interacts with PRR7. Interacts with CAMK2A. Interacts with ARC; preventing ARC oligomerization. Interacts with TMEM25. Interacts (via the extreme C-terminus) with FRMPD2 (via the second PDZ domain); the interaction is direct and is likely to promote NMDAR-mediated neural signal transmission. Interacts with FAM81A; the interaction facilitates condensate formation via liquid-liquid phase separation. Phosphorylated on tyrosine residues. Phosphorylation at Ser-1303 by DAPK1 enhances synaptic NMDA receptor channel activity.

It localises to the cell membrane. The protein resides in the postsynaptic cell membrane. Its subcellular location is the cell projection. It is found in the dendrite. The protein localises to the late endosome. It localises to the lysosome. The protein resides in the cytoplasm. Its subcellular location is the cytoskeleton. The enzyme catalyses Ca(2+)(in) = Ca(2+)(out). It catalyses the reaction Na(+)(in) = Na(+)(out). It carries out the reaction K(+)(in) = K(+)(out). Its function is as follows. Component of N-methyl-D-aspartate (NMDA) receptors (NMDARs) that function as heterotetrameric, ligand-gated cation channels with high calcium permeability and voltage-dependent block by Mg(2+). Participates in synaptic plasticity for learning and memory formation by contributing to the long-term depression (LTD) of hippocampus membrane currents. Channel activation requires binding of the neurotransmitter L-glutamate to the GluN2 subunit, glycine or D-serine binding to the GluN1 subunit, plus membrane depolarization to eliminate channel inhibition by Mg(2+). NMDARs mediate simultaneously the potasium efflux and the influx of calcium and sodium. Each GluN2 subunit confers differential attributes to channel properties, including activation, deactivation and desensitization kinetics, pH sensitivity, Ca2(+) permeability, and binding to allosteric modulators. In concert with DAPK1 at extrasynaptic sites, acts as a central mediator for stroke damage. Its phosphorylation at Ser-1303 by DAPK1 enhances synaptic NMDA receptor channel activity inducing injurious Ca2+ influx through them, resulting in an irreversible neuronal death. In Canis lupus familiaris (Dog), this protein is Glutamate receptor ionotropic, NMDA 2B.